Here is a 556-residue protein sequence, read N- to C-terminus: Formate--tetrahydrofolate ligase (556 aa).

T65 to S72 lines the ATP pocket.

The protein belongs to the formate--tetrahydrofolate ligase family.

It carries out the reaction (6S)-5,6,7,8-tetrahydrofolate + formate + ATP = (6R)-10-formyltetrahydrofolate + ADP + phosphate. It participates in one-carbon metabolism; tetrahydrofolate interconversion. The chain is Formate--tetrahydrofolate ligase from Natranaerobius thermophilus (strain ATCC BAA-1301 / DSM 18059 / JW/NM-WN-LF).